Here is a 372-residue protein sequence, read N- to C-terminus: 4-hydroxy-3-methylbut-2-en-1-yl diphosphate synthase (flavodoxin) (372 aa).

[4Fe-4S] cluster is bound by residues C270, C273, C305, and E312.

It belongs to the IspG family. [4Fe-4S] cluster is required as a cofactor.

The enzyme catalyses (2E)-4-hydroxy-3-methylbut-2-enyl diphosphate + oxidized [flavodoxin] + H2O + 2 H(+) = 2-C-methyl-D-erythritol 2,4-cyclic diphosphate + reduced [flavodoxin]. Its pathway is isoprenoid biosynthesis; isopentenyl diphosphate biosynthesis via DXP pathway; isopentenyl diphosphate from 1-deoxy-D-xylulose 5-phosphate: step 5/6. Its function is as follows. Converts 2C-methyl-D-erythritol 2,4-cyclodiphosphate (ME-2,4cPP) into 1-hydroxy-2-methyl-2-(E)-butenyl 4-diphosphate. The sequence is that of 4-hydroxy-3-methylbut-2-en-1-yl diphosphate synthase (flavodoxin) from Marinobacter nauticus (strain ATCC 700491 / DSM 11845 / VT8) (Marinobacter aquaeolei).